Reading from the N-terminus, the 205-residue chain is Large ribosomal subunit protein uL3 (205 aa).

A disordered region spans residues 126 to 150 (GGPKTHGQSDRHRAPGSIGSTTTPG).

This sequence belongs to the universal ribosomal protein uL3 family. As to quaternary structure, part of the 50S ribosomal subunit. Forms a cluster with proteins L14 and L19.

Its function is as follows. One of the primary rRNA binding proteins, it binds directly near the 3'-end of the 23S rRNA, where it nucleates assembly of the 50S subunit. In Dehalococcoides mccartyi (strain ATCC BAA-2100 / JCM 16839 / KCTC 5957 / BAV1), this protein is Large ribosomal subunit protein uL3.